We begin with the raw amino-acid sequence, 203 residues long: Akirin-2 (203 aa).

Phosphoserine occurs at positions 18 and 21. Residues 22–27 (PKRRRC) carry the Nuclear localization signal motif. At serine 57 the chain carries Phosphoserine. The SYVS motif motif lies at 200-203 (SYVS).

It belongs to the akirin family. Homodimer. Interacts with IPO9; the interaction is direct. Associates (via SYVS motif) with 20S and 26S proteasomes. Interacts with SMARCD1; promoting SWI/SNF complex recruitment. Interacts with NFKBIZ. Interacts with YWHAB. In terms of processing, polyubiquitinated. Polyubiquitination is dependent of UBR5 that extends pre-ubiquitinated AKIRIN2. As to expression, widely expressed with the highest expression in peripheral blood leukocytes.

Its subcellular location is the nucleus. The protein resides in the cytoplasm. It localises to the membrane. Molecular adapter that acts as a bridge between a variety of multiprotein complexes, and which is involved in embryonic development, immunity, myogenesis and brain development. Plays a key role in nuclear protein degradation by promoting import of proteasomes into the nucleus: directly binds to fully assembled 20S proteasomes at one end and to nuclear import receptor IPO9 at the other end, bridging them together and mediating the import of pre-assembled proteasome complexes through the nuclear pore. Involved in innate immunity by regulating the production of interleukin-6 (IL6) downstream of Toll-like receptor (TLR): acts by bridging the NF-kappa-B inhibitor NFKBIZ and the SWI/SNF complex, leading to promote induction of IL6. Also involved in adaptive immunity by promoting B-cell activation. Involved in brain development: required for the survival and proliferation of cerebral cortical progenitor cells. Involved in myogenesis: required for skeletal muscle formation and skeletal development, possibly by regulating expression of muscle differentiation factors. Also plays a role in facilitating interdigital tissue regression during limb development. This Homo sapiens (Human) protein is Akirin-2.